We begin with the raw amino-acid sequence, 291 residues long: MDDEVREKLIEAGKILKQAVNEAAEKIAPGVKILEVAEFVENRIIELGAKPAFPANISINSDAAHFTPKKNDERTFKEGDVVKLDVGAHIDGYIADMAVTVDLGDNTELVKAAKEALEAAMEVVRAGVSVSEIGKAIEDAITNYGFKPIVNLTGHGLLPYLNHAPPSIYNYATEKGVTLEEGMVVAIEPFATNGVGKVGERGECEIYSLLNPRPVRMKMAREILKEVEENYKTLPFAKRWLKKAPDIIISKLAREGVLRAYPVLTEVSGGLVSQWEHTLIVEDGGATITTK.

His-65 is a substrate binding site. A divalent metal cation contacts are provided by Asp-85, Asp-96, and His-155. His-163 contacts substrate. Residues Glu-188 and Glu-276 each coordinate a divalent metal cation.

It belongs to the peptidase M24A family. Methionine aminopeptidase archaeal type 2 subfamily. In terms of assembly, monomer. It depends on Co(2+) as a cofactor. Requires Zn(2+) as cofactor. Mn(2+) serves as cofactor. Fe(2+) is required as a cofactor.

It carries out the reaction Release of N-terminal amino acids, preferentially methionine, from peptides and arylamides.. Functionally, removes the N-terminal methionine from nascent proteins. The N-terminal methionine is often cleaved when the second residue in the primary sequence is small and uncharged (Met-Ala-, Cys, Gly, Pro, Ser, Thr, or Val). The sequence is that of Methionine aminopeptidase from Archaeoglobus fulgidus (strain ATCC 49558 / DSM 4304 / JCM 9628 / NBRC 100126 / VC-16).